The primary structure comprises 330 residues: PDZ and LIM domain protein 4 (330 aa).

A PDZ domain is found at 1 to 84; sequence MTHSVTLRGP…HLTLSVSRPE (84 aa). Disordered stretches follow at residues 104 to 153 and 219 to 242; these read DPES…SNEA and EAGEGGDRPGSGGPRNLKPAASKL. S107, S111, S115, S118, S119, S124, and S134 each carry phosphoserine. A compositionally biased stretch (polar residues) spans 108 to 122; sequence QDCSPATSRRSSVSG. Positions 255-305 constitute an LIM zinc-binding domain; that stretch reads CTRCGHGIVGTIVKARDKLYHPECFMCSDCGLNLKQRGYFFLDERLYCENH.

In terms of assembly, homodimer. Interacts (via C-terminus only or via combined C-terminus and LIM domain, but not LIM domain only) with PTPN13 (via the second or fourth PDZ domains). Found in a complex with PTPN13 and TRIP6. Interacts (via PDZ domain) with ACTN1 and ACTN2 (via C-terminal SDL residues). Interacts (via PDZ domain) with TRIP6 (via the second LIM domain or via the third LIM domain plus C-terminus). Interacts (via LIM domain) with GRIA1 (via C-terminus); this interaction as well as the interaction with alpha-actinin is required for their colocalization in early endosomes. Interacts with PDLIM1. Forms (via LIM domain) a heterodimer with PDLIM3. Interacts directly with SRC (via kinase domain and to a lesser extent the SH2 domain). In terms of processing, phosphorylated on tyrosine residue(s). Can be dephosphorylated by PTPN13. As to expression, expressed in several non-muscle tissues including lung, brain, ovary and uterus, and especially in epithelial cells at 14 dpc. In the uterus, high expression in the glandular epithelium, but absent in the simple columnar epithelium lining the uterus cavity.

The protein resides in the cytoplasm. It localises to the cytoskeleton. It is found in the cell projection. The protein localises to the dendritic spine. Its subcellular location is the early endosome membrane. The protein resides in the recycling endosome membrane. It localises to the nucleus. It is found in the perinuclear region. The protein localises to the lamellipodium. Its subcellular location is the synapse. The protein resides in the synaptosome. Its function is as follows. Suppresses SRC activation by recognizing and binding to active SRC and facilitating PTPN13-mediated dephosphorylation of SRC 'Tyr-419' leading to its inactivation. Inactivated SRC dissociates from this protein allowing the initiation of a new SRC inactivation cycle. Involved in reorganization of the actin cytoskeleton. In nonmuscle cells, binds to ACTN1 (alpha-actinin-1), increases the affinity of ACTN1 to F-actin (filamentous actin), and promotes formation of actin stress fibers. Involved in regulation of the synaptic AMPA receptor transport in dendritic spines of hippocampal pyramidal neurons directing the receptors toward an insertion at the postsynaptic membrane. Links endosomal surface-internalized GRIA1-containing AMPA receptors to the alpha-actinin/actin cytoskeleton. Increases AMPA receptor-mediated excitatory postsynaptic currents in neurons. The protein is PDZ and LIM domain protein 4 (Pdlim4) of Mus musculus (Mouse).